A 577-amino-acid chain; its full sequence is Zinc finger-containing ubiquitin peptidase 1 (577 aa).

A C2H2-type 1 zinc finger spans residues 2-24; sequence LSCDICGETVTSEPDRKAHLIVH. The C2H2-type 2; atypical zinc-finger motif lies at 29–52; that stretch reads IICPFCKLSGINYNEMCFHIETAH. C2H2-type zinc fingers lie at residues 153 to 176 and 192 to 214; these read PECP…KTKH and YDCP…VDLH. An MIU region spans residues 225–247; that stretch reads DRVQCSSDRELAHQLQQEEERKR. The segment covering 231 to 261 has biased composition (basic and acidic residues); it reads SDRELAHQLQQEEERKRKSEESRQEREEFQK. The tract at residues 231–262 is disordered; it reads SDRELAHQLQQEEERKRKSEESRQEREEFQKL. Residues 248–273 are zUBD/ZHA; it reads KSEESRQEREEFQKLQRQYGLDNSGG. Lys-261 bears the N6-acetyllysine mark. The active-site Nucleophile is Cys-359. His-490 functions as the Proton acceptor in the catalytic mechanism. The active site involves Asp-511.

This sequence belongs to the peptidase C78 family. ZUFSP subfamily. As to quaternary structure, interacts with RPA1 and RPA2.

The protein localises to the cytoplasm. The protein resides in the nucleus. It carries out the reaction Thiol-dependent hydrolysis of ester, thioester, amide, peptide and isopeptide bonds formed by the C-terminal Gly of ubiquitin (a 76-residue protein attached to proteins as an intracellular targeting signal).. Deubiquitinase with endodeubiquitinase activity that specifically interacts with and cleaves 'Lys-63'-linked long polyubiquitin chains. Shows only weak activity against 'Lys-11' and 'Lys-48'-linked chains. Plays an important role in genome stability pathways, functioning to prevent spontaneous DNA damage and also promote cellular survival in response to exogenous DNA damage. Modulates the ubiquitination status of replication protein A (RPA) complex proteins in response to replication stress. In Rattus norvegicus (Rat), this protein is Zinc finger-containing ubiquitin peptidase 1.